Reading from the N-terminus, the 543-residue chain is Ipecac alkaloid beta-glucosidase 2 (543 aa).

A beta-D-glucoside is bound by residues Gln-36, His-140, Asn-185–Glu-186, Tyr-350, Glu-422, Trp-471, and Phe-487. Glu-186 (proton donor) is an active-site residue. Glu-422 functions as the Nucleophile in the catalytic mechanism.

It belongs to the glycosyl hydrolase 1 family.

The protein resides in the cytoplasm. It is found in the cytosol. The catalysed reaction is deacetylipecoside + H2O = deacetylipecoside aglycone + D-glucose. It carries out the reaction deacetylisoipecoside + H2O = deacetylisoipecoside aglycone + D-glucose. The protein operates within alkaloid biosynthesis. Beta-glucosidase catalyzing deglucosylation on N-deacetylisoipecoside and N-deacetylipecoside. The sequence is that of Ipecac alkaloid beta-glucosidase 2 from Carapichea ipecacuanha (Ipecac).